We begin with the raw amino-acid sequence, 298 residues long: 4-hydroxy-tetrahydrodipicolinate synthase (298 aa).

Position 48 (T48) interacts with pyruvate. Residue Y137 is the Proton donor/acceptor of the active site. Catalysis depends on K166, which acts as the Schiff-base intermediate with substrate. I207 is a pyruvate binding site.

Belongs to the DapA family. Homotetramer; dimer of dimers.

The protein localises to the cytoplasm. The catalysed reaction is L-aspartate 4-semialdehyde + pyruvate = (2S,4S)-4-hydroxy-2,3,4,5-tetrahydrodipicolinate + H2O + H(+). It functions in the pathway amino-acid biosynthesis; L-lysine biosynthesis via DAP pathway; (S)-tetrahydrodipicolinate from L-aspartate: step 3/4. Catalyzes the condensation of (S)-aspartate-beta-semialdehyde [(S)-ASA] and pyruvate to 4-hydroxy-tetrahydrodipicolinate (HTPA). The polypeptide is 4-hydroxy-tetrahydrodipicolinate synthase (Campylobacter jejuni subsp. doylei (strain ATCC BAA-1458 / RM4099 / 269.97)).